We begin with the raw amino-acid sequence, 238 residues long: Cysteine-rich venom protein (238 aa).

A signal peptide spans 1-19 (MIAFIVLLSLAAVLQQSSG). A propeptide spanning residues 20–27 (TVDFASES) is cleaved from the precursor. One can recognise an SCP domain in the interval 39 to 164 (KKHNALRRSV…PTKYLYVCQY (126 aa)). 8 disulfides stabilise this stretch: cysteine 75-cysteine 153, cysteine 92-cysteine 165, cysteine 148-cysteine 162, cysteine 184-cysteine 191, cysteine 187-cysteine 196, cysteine 200-cysteine 233, cysteine 209-cysteine 227, and cysteine 218-cysteine 231. Positions 200–233 (CKREDDYSNCKSLAEKNKCMEEWMKSKCPASCFC) constitute a ShKT domain.

The protein belongs to the CRISP family. As to expression, expressed by the venom gland.

The protein localises to the secreted. Its function is as follows. Blocks olfactory (CNGA2) and retinal (CNGA1) cyclic nucleotide-gated (CNG) ion channel currents. Does not inhibit retinal (CNGA3) currents. It forms high-affinity contacts with the pore turret region and most likely inhibits CNG channel current by blocking the external entrance to the transmembrane pore. Does not affect neither depolarization- nor caffeine-induced contraction arterial smooth muscle. This chain is Cysteine-rich venom protein, found in Demansia vestigiata (Lesser black whip snake).